The primary structure comprises 501 residues: Cytochrome P450 71D6 (501 aa).

Residue C442 coordinates heme.

This sequence belongs to the cytochrome P450 family. Requires heme as cofactor.

The polypeptide is Cytochrome P450 71D6 (CYP71D6) (Solanum chacoense (Chaco potato)).